Reading from the N-terminus, the 156-residue chain is Large ribosomal subunit protein uL15 (156 aa).

The interval 25-48 (RGIGCGKGKTSGRGHKGQKARSGV) is disordered. The span at 34–43 (TSGRGHKGQK) shows a compositional bias: basic residues.

This sequence belongs to the universal ribosomal protein uL15 family. In terms of assembly, part of the 50S ribosomal subunit.

Its function is as follows. Binds to the 23S rRNA. The sequence is that of Large ribosomal subunit protein uL15 from Wolbachia pipientis wMel.